A 269-amino-acid polypeptide reads, in one-letter code: Eukaryotic translation initiation factor 3 subunit G (269 aa).

Residues 140–181 (AIGGGDMSAQGGSGSGRYVPPSLRAGARDPSSNAYQDQRERD) form a disordered region. A compositionally biased stretch (gly residues) spans 141–154 (IGGGDMSAQGGSGS). Serine 161 is subject to Phosphoserine. The 80-residue stretch at 184–263 (KTIRLTQVNE…FMLHAEWSKP (80 aa)) folds into the RRM domain.

It belongs to the eIF-3 subunit G family. In terms of assembly, component of the eukaryotic translation initiation factor 3 (eIF-3) complex.

It localises to the cytoplasm. RNA-binding component of the eukaryotic translation initiation factor 3 (eIF-3) complex, which is involved in protein synthesis of a specialized repertoire of mRNAs and, together with other initiation factors, stimulates binding of mRNA and methionyl-tRNAi to the 40S ribosome. The eIF-3 complex specifically targets and initiates translation of a subset of mRNAs involved in cell proliferation. This subunit can bind 18S rRNA. The protein is Eukaryotic translation initiation factor 3 subunit G of Kluyveromyces lactis (strain ATCC 8585 / CBS 2359 / DSM 70799 / NBRC 1267 / NRRL Y-1140 / WM37) (Yeast).